The chain runs to 99 residues: Aspartyl/glutamyl-tRNA(Asn/Gln) amidotransferase subunit C (99 aa).

It belongs to the GatC family. As to quaternary structure, heterotrimer of A, B and C subunits.

It catalyses the reaction L-glutamyl-tRNA(Gln) + L-glutamine + ATP + H2O = L-glutaminyl-tRNA(Gln) + L-glutamate + ADP + phosphate + H(+). The enzyme catalyses L-aspartyl-tRNA(Asn) + L-glutamine + ATP + H2O = L-asparaginyl-tRNA(Asn) + L-glutamate + ADP + phosphate + 2 H(+). Functionally, allows the formation of correctly charged Asn-tRNA(Asn) or Gln-tRNA(Gln) through the transamidation of misacylated Asp-tRNA(Asn) or Glu-tRNA(Gln) in organisms which lack either or both of asparaginyl-tRNA or glutaminyl-tRNA synthetases. The reaction takes place in the presence of glutamine and ATP through an activated phospho-Asp-tRNA(Asn) or phospho-Glu-tRNA(Gln). The chain is Aspartyl/glutamyl-tRNA(Asn/Gln) amidotransferase subunit C from Mycolicibacterium vanbaalenii (strain DSM 7251 / JCM 13017 / BCRC 16820 / KCTC 9966 / NRRL B-24157 / PYR-1) (Mycobacterium vanbaalenii).